The primary structure comprises 148 residues: Small ribosomal subunit protein eS6 (148 aa).

This sequence belongs to the eukaryotic ribosomal protein eS6 family.

The polypeptide is Small ribosomal subunit protein eS6 (Pyrobaculum neutrophilum (strain DSM 2338 / JCM 9278 / NBRC 100436 / V24Sta) (Thermoproteus neutrophilus)).